The sequence spans 906 residues: Eukaryotic translation initiation factor 3 subunit C (906 aa).

A disordered region spans residues Met1–Ala22. Positions Ser11–Val20 are enriched in acidic residues. 4 positions are modified to phosphoserine: Ser34, Ser165, Ser176, and Ser185. Positions Arg158 to Glu283 are disordered. The span at Asp162–Asp186 shows a compositional bias: acidic residues. Residues Glu195–Ala209 show a composition bias toward low complexity. Residues Ala211–Asn237 are compositionally biased toward acidic residues. Residues Met242–Ile270 show a composition bias toward basic and acidic residues. In terms of domain architecture, PCI spans Phe641–Pro817. 2 disordered regions span residues Gly853–Gly873 and Gln887–Glu906. Residues Gln894–Glu906 are compositionally biased toward low complexity.

It belongs to the eIF-3 subunit C family. In terms of assembly, component of the eukaryotic translation initiation factor 3 (eIF-3) complex. The eIF-3 complex interacts with pix.

The protein resides in the cytoplasm. Its function is as follows. Component of the eukaryotic translation initiation factor 3 (eIF-3) complex, which is involved in protein synthesis of a specialized repertoire of mRNAs and, together with other initiation factors, stimulates binding of mRNA and methionyl-tRNAi to the 40S ribosome. The eIF-3 complex specifically targets and initiates translation of a subset of mRNAs involved in cell proliferation. The protein is Eukaryotic translation initiation factor 3 subunit C of Drosophila ananassae (Fruit fly).